The chain runs to 106 residues: Iron-sulfur cluster assembly protein CyaY (106 aa).

The protein belongs to the frataxin family.

Functionally, involved in iron-sulfur (Fe-S) cluster assembly. May act as a regulator of Fe-S biogenesis. The polypeptide is Iron-sulfur cluster assembly protein CyaY (Pectobacterium carotovorum subsp. carotovorum (strain PC1)).